Here is a 439-residue protein sequence, read N- to C-terminus: Protein disulfide-isomerase A6 (439 aa).

Positions 1-19 (MARLGFGLVSCTFFLAASG) are cleaved as a signal peptide. Thioredoxin domains are found at residues 20–133 (LYSS…ALRQ) and 151–287 (QGRG…EDVA). Residues cysteine 55 and cysteine 58 each act as nucleophile in the active site. Residues cysteine 55 and cysteine 58 are joined by a disulfide bond. 3 positions are modified to phosphoserine: serine 129, serine 156, and serine 158. The interval 141 to 160 (GRSGGYSSGKQGRGDSSSKK) is disordered. Active-site nucleophile residues include cysteine 190 and cysteine 193. Cysteine 190 and cysteine 193 form a disulfide bridge. A disordered region spans residues 400-425 (GSFPAITAREPWDGRDGELPVEDDID). At serine 427 the chain carries Phosphoserine. The Prevents secretion from ER motif lies at 436–439 (KDEL).

This sequence belongs to the protein disulfide isomerase family. In terms of assembly, part of a large chaperone multiprotein complex comprising DNAJB11, HSP90B1, HSPA5, HYOU, PDIA2, PDIA4, PDIA6, PPIB, SDF2L1, UGGT1 and very small amounts of ERP29, but not, or at very low levels, CALR nor CANX. Interacts with MICA on the surface of tumor cells, leading to MICA disulfide bond reduction which is required for its release from tumor cells. Interacts with ITGB3 following platelet stimulation. Interacts with ERN1; the interaction is direct. Interacts with EIF2AK3. Expressed most abundantly in lung and kidney, followed by heart, liver and brain.

It is found in the endoplasmic reticulum lumen. Its subcellular location is the cell membrane. The protein resides in the melanosome. The catalysed reaction is Catalyzes the rearrangement of -S-S- bonds in proteins.. May function as a chaperone that inhibits aggregation of misfolded proteins. Negatively regulates the unfolded protein response (UPR) through binding to UPR sensors such as ERN1, which in turn inactivates ERN1 signaling. May also regulate the UPR via the EIF2AK3 UPR sensor. Plays a role in platelet aggregation and activation by agonists such as convulxin, collagen and thrombin. The sequence is that of Protein disulfide-isomerase A6 (PDIA6) from Mesocricetus auratus (Golden hamster).